Reading from the N-terminus, the 230-residue chain is DNA mismatch repair protein MutH (230 aa).

It belongs to the MutH family.

The protein resides in the cytoplasm. Sequence-specific endonuclease that cleaves unmethylated GATC sequences. It is involved in DNA mismatch repair. The chain is DNA mismatch repair protein MutH from Enterobacter sp. (strain 638).